A 672-amino-acid polypeptide reads, in one-letter code: DNA ligase (672 aa).

NAD(+) contacts are provided by residues 32 to 36, 81 to 82, and E114; these read DSEYD and SL. K116 functions as the N6-AMP-lysine intermediate in the catalytic mechanism. Residues R137, E174, K291, and K315 each contribute to the NAD(+) site. Zn(2+)-binding residues include C409, C412, C427, and C433. One can recognise a BRCT domain in the interval 592-672; it reads VNENPFKEKT…EFLEIVNSFS (81 aa).

It belongs to the NAD-dependent DNA ligase family. LigA subfamily. It depends on Mg(2+) as a cofactor. Mn(2+) is required as a cofactor.

It catalyses the reaction NAD(+) + (deoxyribonucleotide)n-3'-hydroxyl + 5'-phospho-(deoxyribonucleotide)m = (deoxyribonucleotide)n+m + AMP + beta-nicotinamide D-nucleotide.. Its function is as follows. DNA ligase that catalyzes the formation of phosphodiester linkages between 5'-phosphoryl and 3'-hydroxyl groups in double-stranded DNA using NAD as a coenzyme and as the energy source for the reaction. It is essential for DNA replication and repair of damaged DNA. In Actinobacillus succinogenes (strain ATCC 55618 / DSM 22257 / CCUG 43843 / 130Z), this protein is DNA ligase.